The primary structure comprises 316 residues: Probable cell division protein WhiA (316 aa).

Residues 275–309 constitute a DNA-binding region (H-T-H motif); sequence TLKELGEMVSGGKISKSGINHRLRKIDEIAEKLRA.

This sequence belongs to the WhiA family.

In terms of biological role, involved in cell division and chromosome segregation. The sequence is that of Probable cell division protein WhiA from Bacillus cereus (strain B4264).